A 97-amino-acid chain; its full sequence is DNA-directed RNA polymerase subunit omega (97 aa).

Polar residues predominate over residues 1 to 16 (MSTPNALAAFNSSPSL). A disordered region spans residues 1–21 (MSTPNALAAFNSSPSLNAPEG).

Belongs to the RNA polymerase subunit omega family. The RNAP catalytic core consists of 2 alpha, 1 beta, 1 beta' and 1 omega subunit. When a sigma factor is associated with the core the holoenzyme is formed, which can initiate transcription.

It catalyses the reaction RNA(n) + a ribonucleoside 5'-triphosphate = RNA(n+1) + diphosphate. Promotes RNA polymerase assembly. Latches the N- and C-terminal regions of the beta' subunit thereby facilitating its interaction with the beta and alpha subunits. The protein is DNA-directed RNA polymerase subunit omega of Saccharopolyspora erythraea (strain ATCC 11635 / DSM 40517 / JCM 4748 / NBRC 13426 / NCIMB 8594 / NRRL 2338).